The following is a 183-amino-acid chain: RNA 2',3'-cyclic phosphodiesterase (183 aa).

Histidine 44 functions as the Proton donor in the catalytic mechanism. Short sequence motifs (HXTX) lie at residues 44 to 47 (HITL) and 130 to 133 (HMTL). The Proton acceptor role is filled by histidine 130.

It belongs to the 2H phosphoesterase superfamily. ThpR family.

The catalysed reaction is a 3'-end 2',3'-cyclophospho-ribonucleotide-RNA + H2O = a 3'-end 2'-phospho-ribonucleotide-RNA + H(+). Its function is as follows. Hydrolyzes RNA 2',3'-cyclic phosphodiester to an RNA 2'-phosphomonoester. The polypeptide is RNA 2',3'-cyclic phosphodiesterase (ytlP) (Bacillus subtilis (strain 168)).